Consider the following 352-residue polypeptide: Outer membrane protein assembly factor BamC (352 aa).

Residues 1–24 (MAISLQKSTVVKVVGVSLVMLLAA) form the signal peptide. Residue cysteine 25 is the site of N-palmitoyl cysteine attachment. Cysteine 25 is lipidated: S-diacylglycerol cysteine.

It belongs to the BamC family. Part of the Bam complex, which is composed of the outer membrane protein BamA, and four lipoproteins BamB, BamC, BamD and BamE.

It localises to the cell outer membrane. Part of the outer membrane protein assembly complex, which is involved in assembly and insertion of beta-barrel proteins into the outer membrane. This chain is Outer membrane protein assembly factor BamC, found in Yersinia pestis.